The sequence spans 253 residues: Indole-3-glycerol phosphate synthase (253 aa).

This sequence belongs to the TrpC family.

It carries out the reaction 1-(2-carboxyphenylamino)-1-deoxy-D-ribulose 5-phosphate + H(+) = (1S,2R)-1-C-(indol-3-yl)glycerol 3-phosphate + CO2 + H2O. It functions in the pathway amino-acid biosynthesis; L-tryptophan biosynthesis; L-tryptophan from chorismate: step 4/5. This is Indole-3-glycerol phosphate synthase from Bacillus cereus (strain ATCC 10987 / NRS 248).